A 159-amino-acid chain; its full sequence is Immunoglobulin J chain (159 aa).

A signal peptide spans 1–21 (MKTHLLLWGVLAIFVKAVLVT). Intrachain disulfides connect Cys-34–Cys-123, Cys-93–Cys-113, and Cys-131–Cys-156. Asn-70 is a glycosylation site (N-linked (GlcNAc...) (complex) asparagine).

Part of the secretory IgA (sIgA) complex that consists of two, four or five IgA monomers, and two additional non-Ig polypeptides, namely the JCHAIN and the secretory component (the proteolytic product of PIGR). Part of the secretory IgM (sIgM) complex that consist of five IgM monomers, and two additional non-Ig polypeptides, namely the JCHAIN and the secretory component (the proteolytic product of PIGR). JCHAIN-containing IgM interacts (via CH4 domain) with FCRM (via Ig-like domain).

Its subcellular location is the secreted. In terms of biological role, serves to link two monomer units of either IgM or IgA. In the case of IgM, the J chain-joined dimer is a nucleating unit for the IgM pentamer, and in the case of IgA it induces dimers and/or larger polymers. It also helps to bind these immunoglobulins to secretory component. The chain is Immunoglobulin J chain from Mus musculus (Mouse).